A 207-amino-acid polypeptide reads, in one-letter code: Large ribosomal subunit protein uL3 (207 aa).

This sequence belongs to the universal ribosomal protein uL3 family. As to quaternary structure, part of the 50S ribosomal subunit. Forms a cluster with proteins L14 and L19.

Functionally, one of the primary rRNA binding proteins, it binds directly near the 3'-end of the 23S rRNA, where it nucleates assembly of the 50S subunit. This chain is Large ribosomal subunit protein uL3, found in Fervidobacterium nodosum (strain ATCC 35602 / DSM 5306 / Rt17-B1).